Consider the following 942-residue polypeptide: Homeobox transcription factor phx1 (942 aa).

4 stretches are compositionally biased toward polar residues: residues 1-19 (MRSYSNPENGGQINDNINY), 61-73 (HLQGEQQNPTNPN), 99-116 (ADNNSFDNVNSSKLTNPS), and 122-135 (IVKSESEPANSKQN). Disordered stretches follow at residues 1–54 (MRSY…MQLP), 61–80 (HLQGEQQNPTNPNYFPPEFD), 87–172 (KQEK…KKQR), 604–651 (WANQ…STST), and 892–922 (SSSGGVYASQPGASGYLSHDQSGSPFEDVYS). Over residues 142–151 (SVEKAKENVA) the composition is skewed to basic and acidic residues. Residues 153–164 (ESGTPESGGSTS) show a composition bias toward low complexity. A DNA-binding region (homeobox) is located at residues 164-224 (SAPKSKKQRL…QNRRAKSKLI (61 aa)). Polar residues-rich tracts occupy residues 604-614 (WANQLPRQPDS) and 630-641 (SHDTSSEYGNKS).

It localises to the nucleus. Functionally, trnascription factor that regulates the expression of the homocitrate synthase (HCS) lys4. The protein is Homeobox transcription factor phx1 (phx1) of Schizosaccharomyces pombe (strain 972 / ATCC 24843) (Fission yeast).